Here is a 352-residue protein sequence, read N- to C-terminus: Ion-translocating oxidoreductase complex subunit D (352 aa).

The next 5 helical transmembrane spans lie at 20 to 40, 42 to 62, 78 to 109, 123 to 143, and 148 to 168; these read IMLL…RFFG, GTLV…ALVL, ALLT…VIIA, PAMI…TSWL, and IAVN…GHTA. Threonine 187 carries the FMN phosphoryl threonine modification. 4 consecutive transmembrane segments (helical) span residues 214–234, 242–262, 267–287, and 301–318; these read ILAG…GVWL, WHIP…GWLF, LAAP…FFIL, and LMFG…RSFG.

The protein belongs to the NqrB/RnfD family. As to quaternary structure, the complex is composed of six subunits: RsxA, RsxB, RsxC, RsxD, RsxE and RsxG. It depends on FMN as a cofactor.

The protein localises to the cell inner membrane. Functionally, part of a membrane-bound complex that couples electron transfer with translocation of ions across the membrane. Required to maintain the reduced state of SoxR. This is Ion-translocating oxidoreductase complex subunit D from Shigella flexneri.